The sequence spans 332 residues: Invasin IpaD (332 aa).

A compositionally biased stretch (low complexity) spans 1 to 25 (MNITTLTNSISTSSFSPNNTNGSST). The segment at 1 to 43 (MNITTLTNSISTSSFSPNNTNGSSTETVNSDIKTTTSSHPVSS) is disordered. The span at 26-43 (ETVNSDIKTTTSSHPVSS) shows a compositional bias: polar residues. Residues 44–77 (LTMLNDTLHNIRTTNQALKKELSQKTLTKTSLEE) adopt a coiled-coil conformation. The segment at 192 to 267 (VNSLKKALEE…KSLDNLGGNG (76 aa)) is ipaB binding.

Belongs to the invasin protein D family.

It is found in the secreted. Functionally, required for bacterial invasion of host cells. Controls IpaB and IpaC secretion, and the efficiency with which they are physically inserted into target cell membranes. These proteins are exported via T3SS to form a pore in the host membrane that allows the translocation of the other effectors into the host cytoplasm. Along with IpaB, is essential for both blocking secretion through the Mxi/Spa translocon in the absence of a secretion-inducing signal, and for controlling the level of secretion in the presence of this signal. This Shigella flexneri protein is Invasin IpaD (ipaD).